A 333-amino-acid polypeptide reads, in one-letter code: 1,5-anhydro-D-fructose reductase (333 aa).

NADP(+) contacts are provided by residues 9 to 12, 33 to 34, Arg-38, 71 to 76, 93 to 94, Asn-120, 162 to 163, and Tyr-283; these read ASTI, SS, TTNELH, EK, and WR.

This sequence belongs to the Gfo/Idh/MocA family. As to quaternary structure, monomer.

It catalyses the reaction 1,5-anhydro-D-mannitol + NADP(+) = 1,5-anhydro-D-fructose + NADPH + H(+). In terms of biological role, catalyzes the NADPH-specific reduction of 1,5-anhydro-D-fructose to 1,5-anhydro-D-mannitol. This chain is 1,5-anhydro-D-fructose reductase (afr), found in Rhizobium meliloti (strain 1021) (Ensifer meliloti).